Here is a 1299-residue protein sequence, read N- to C-terminus: DExH-box ATP-dependent RNA helicase DExH6 (1299 aa).

The R3H domain occupies 15-82 (PTSVEATRIW…QRRLSIFKSR (68 aa)). Residues 197-366 (TSAVESNQVI…FGGCPVVRVP (170 aa)) form the Helicase ATP-binding domain. 210-217 (GETGCGKT) is a binding site for ATP. The DEIH box signature appears at 313 to 316 (DEIH). The region spanning 537-711 (LIQQLMRKIC…ELCLQVKILD (175 aa)) is the Helicase C-terminal domain. Disordered regions lie at residues 987–1039 (PTGS…MMSS) and 1175–1299 (IPRQ…AEQK). Residues 992 to 1006 (DSDDSNEEEEDDEEV) show a composition bias toward acidic residues. Residues 1007–1020 (AANTNEEVAANTNE) are compositionally biased toward low complexity. The segment covering 1023-1032 (MDIHKEESRR) has biased composition (basic and acidic residues). Polar residues-rich tracts occupy residues 1176 to 1193 (PRQQNYKQRNPKATNNTD), 1204 to 1214 (NPTNRINQPEA), and 1239 to 1251 (PSDQAYGNKQHNT). Residues 1182–1200 (KQRNPKATNNTDSGKKKEK) carry the Bipartite nuclear localization signal motif. A Bipartite nuclear localization signal motif is present at residues 1267–1283 (KKTKTRSGNNSDSGKKK). The segment covering 1279–1299 (SGKKKEQYIPKRQREDKAEQK) has biased composition (basic and acidic residues).

The protein belongs to the DExH box helicase family. As to expression, specifically expressed in the tapetum and vascular tissues.

The protein localises to the nucleus. It catalyses the reaction ATP + H2O = ADP + phosphate + H(+). Functionally, may function as an ATP-dependent RNA/DNA helicase. The chain is DExH-box ATP-dependent RNA helicase DExH6 from Arabidopsis thaliana (Mouse-ear cress).